The sequence spans 294 residues: Farnesyl diphosphate synthase (294 aa).

Isopentenyl diphosphate contacts are provided by K45, R48, and H77. Mg(2+)-binding residues include D84 and D90. Position 95 (R95) interacts with (2E)-geranyl diphosphate. R96 lines the isopentenyl diphosphate pocket. The (2E)-geranyl diphosphate site is built by K181, T182, and Q220.

Belongs to the FPP/GGPP synthase family. Mg(2+) is required as a cofactor.

The protein localises to the cytoplasm. It carries out the reaction isopentenyl diphosphate + (2E)-geranyl diphosphate = (2E,6E)-farnesyl diphosphate + diphosphate. The sequence is that of Farnesyl diphosphate synthase (ispA) from Buchnera aphidicola subsp. Schizaphis graminum (strain Sg).